Here is a 348-residue protein sequence, read N- to C-terminus: Rhodopsin (348 aa).

Met1 bears the N-acetylmethionine mark. Residues 1–36 lie on the Extracellular side of the membrane; it reads MNGTEGPNFYVPFSNKTGVVRSPFEAPQYYLAEPWQ. Residues Asn2 and Asn15 are each glycosylated (N-linked (GlcNAc...) asparagine). Residues 37 to 61 form a helical membrane-spanning segment; sequence FSMLAAYMFLLIVLGFPINFLTLYV. Topologically, residues 62–73 are cytoplasmic; that stretch reads TVQHKKLRTPLN. A helical membrane pass occupies residues 74–96; that stretch reads YILLNLAVADLFMVFGGFTTTLY. The Extracellular portion of the chain corresponds to 97 to 110; it reads TSLHGYFVFGPTGC. Residues Cys110 and Cys187 are joined by a disulfide bond. The chain crosses the membrane as a helical span at residues 111–133; it reads NLEGFFATLGGEIALWSLVVLAI. Positions 134 to 136 match the 'Ionic lock' involved in activated form stabilization motif; it reads ERY. Over 134–152 the chain is Cytoplasmic; that stretch reads ERYVVVCKPMSNFRFGENH. Residues 153 to 173 traverse the membrane as a helical segment; that stretch reads AIMGVAFTWVMALACAAPPLV. At 174–202 the chain is on the extracellular side; that stretch reads GWSRYIPQGMQCSCGALYFTLKPEINNES. Residue Glu201 coordinates Zn(2+). Residues 203–224 traverse the membrane as a helical segment; that stretch reads FVIYMFVVHFSIPLIVIFFCYG. Topologically, residues 225 to 252 are cytoplasmic; that stretch reads QLVFTVKEAAAQQQESATTQKAEKEVTR. Residues 253 to 274 form a helical membrane-spanning segment; that stretch reads MVIIMVIAFLICWLPYAGVAFY. The Extracellular segment spans residues 275-286; it reads IFTHQGSDFGPI. Residue Gln279 coordinates Zn(2+). The chain crosses the membrane as a helical span at residues 287-308; the sequence is FMTIPAFFAKSSSVYNPVIYIM. Position 296 is an N6-(retinylidene)lysine (Lys296). The Cytoplasmic segment spans residues 309 to 348; sequence MNKQFRNCMLTTLCCGKNPLGDDEASTTVSKTETSQVAPA. Residues Cys322 and Cys323 are each lipidated (S-palmitoyl cysteine). Positions 330–348 are interaction with SAG; sequence DDEASTTVSKTETSQVAPA. Ser334 bears the Phosphoserine mark. Ser334 carries the post-translational modification Phosphoserine; by RK and GRK7. Residues Thr335 and Thr336 each carry the phosphothreonine modification. A phosphothreonine; by RK and GRK7 mark is found at Thr335 and Thr336. Ser338 bears the Phosphoserine; by RK and GRK7 mark. Thr340 and Thr342 each carry phosphothreonine. Ser343 carries the post-translational modification Phosphoserine; by RK and GRK7.

Belongs to the G-protein coupled receptor 1 family. Opsin subfamily. As to quaternary structure, homodimer. May form a complex composed of RHO, GRK1 and RCVRN in a Ca(2+)-dependent manner; RCVRN prevents the interaction between GRK1 and RHO. Interacts with GRK1. Interacts (phosphorylated form) with SAG. Interacts with GNAT1. Interacts with GNAT3. SAG and G-proteins compete for a common binding site. Interacts with PRCD; the interaction promotes PRCD stability. Forms a complex with ASAP1 and ARF4. Forms a complex with ASAP1, RAB11A, Rabin8/RAB3IP, ARF4 and RAB11FIP3; the complex regulates Golgi-to-cilia rhodopsin/RHO transport in photoreceptors. Post-translationally, phosphorylated on some or all of the serine and threonine residues present in the C-terminal region. Contains one covalently linked retinal chromophore. Upon light absorption, the covalently bound 11-cis-retinal is converted to all-trans-retinal. After hydrolysis of the Schiff base and release of the covalently bound all-trans-retinal, active rhodopsin is regenerated by binding of a fresh molecule of 11-cis-retinal.

It localises to the membrane. Its subcellular location is the cell projection. The protein localises to the cilium. The protein resides in the photoreceptor outer segment. Photoreceptor required for image-forming vision at low light intensity. Required for photoreceptor cell viability after birth. Light-induced isomerization of 11-cis to all-trans retinal triggers a conformational change that activates signaling via G-proteins. Subsequent receptor phosphorylation mediates displacement of the bound G-protein alpha subunit by the arrestin SAG and terminates signaling. This is Rhodopsin (RHO) from Ovis aries (Sheep).